A 240-amino-acid chain; its full sequence is BLOC-1-related complex subunit 8 homolog (240 aa).

Disordered stretches follow at residues 1 to 33 and 163 to 240; these read MSSI…GSHG and KTFS…EKIN. Composition is skewed to low complexity over residues 7–26 and 163–179; these read SSTG…NNIS and KTFS…QQQQ. Residues 180 to 190 show a composition bias toward polar residues; it reads TNLTPSKPTLS. Over residues 196–205 the composition is skewed to low complexity; sequence DNNNNNNNLN. The span at 208 to 240 shows a compositional bias: basic and acidic residues; the sequence is EKIEKEEKIEKEDEGKEKDEKEKDDKDLNEKIN. The stretch at 211-239 forms a coiled coil; that stretch reads EKEEKIEKEDEGKEKDEKEKDDKDLNEKI.

This sequence belongs to the BORCS8 family.

The protein localises to the lysosome membrane. In terms of biological role, may participate in the coupling of lysosomes to microtubule plus-end-directed kinesin motor. In Dictyostelium discoideum (Social amoeba), this protein is BLOC-1-related complex subunit 8 homolog.